Reading from the N-terminus, the 379-residue chain is Heme A synthase (379 aa).

A disordered region spans residues 1 to 28 (MAGSRSIFEEVQDSQKPAAMPGGVSRDR). Helical transmembrane passes span 35-55 (VRVFIMILFVMVVVQIAIGGL), 124-144 (FLGVVWAVGFVGLLATKSVPV), 150-170 (LLLLGVLGGLQGVAGWWMVHS), 183-203 (RLAVHLGLAFLILGLMAWYIL), 227-247 (ATGLLHLTALQILIGALVAGI), 287-307 (FFHRVTGYLLFVIGVAAWIMA), 318-338 (AFDWMAVMLFGQIVLGIMTVM), and 341-361 (SPWYLAIVHQFGAVVLITLIL). Residue H289 participates in heme binding. H349 is a heme binding site.

Belongs to the COX15/CtaA family. Type 2 subfamily. As to quaternary structure, interacts with CtaB. Heme b serves as cofactor.

It localises to the cell membrane. The enzyme catalyses Fe(II)-heme o + 2 A + H2O = Fe(II)-heme a + 2 AH2. The protein operates within porphyrin-containing compound metabolism; heme A biosynthesis; heme A from heme O: step 1/1. Functionally, catalyzes the conversion of heme O to heme A by two successive hydroxylations of the methyl group at C8. The first hydroxylation forms heme I, the second hydroxylation results in an unstable dihydroxymethyl group, which spontaneously dehydrates, resulting in the formyl group of heme A. This Jannaschia sp. (strain CCS1) protein is Heme A synthase.